Here is a 150-residue protein sequence, read N- to C-terminus: Nucleoside diphosphate kinase (150 aa).

ATP is bound by residues Lys9, Phe57, Arg85, Thr91, Arg102, and Asn112. Residue His115 is the Pros-phosphohistidine intermediate of the active site.

Belongs to the NDK family. In terms of assembly, homotetramer. Mg(2+) serves as cofactor.

Its subcellular location is the cytoplasm. The catalysed reaction is a 2'-deoxyribonucleoside 5'-diphosphate + ATP = a 2'-deoxyribonucleoside 5'-triphosphate + ADP. The enzyme catalyses a ribonucleoside 5'-diphosphate + ATP = a ribonucleoside 5'-triphosphate + ADP. Functionally, major role in the synthesis of nucleoside triphosphates other than ATP. The ATP gamma phosphate is transferred to the NDP beta phosphate via a ping-pong mechanism, using a phosphorylated active-site intermediate. The sequence is that of Nucleoside diphosphate kinase from Staphylococcus carnosus (strain TM300).